The chain runs to 525 residues: MLECLSALLVLFAGGGGSVLAAVQSKTVADPNLCPGYNSQLISPFLSSCKRNLSECVSRYFDEQYAFCRSCVTVNNETMEDLDNCKCLQCALSSLNNSCFHDYCTSKDEYDKLQIVVEQFQLTNGVLDDGEILKPRGNKFSSRKLSYFVGQNNTLFRNPLQFEKNQLISALLTSLTNNQKTISSVDMFEVVDANNEVQYLRERTISGKTLSPATGYEEENDGDCSVKDKKWEGKIEYHENKKVSSENCSKDTDDKSGSKKERNTKAPLFHTATEIHMTRWSSWRPKKIFTRYLVNEYQSPKIITTVNRFYRTKTDTETGTTLITSTKAKRRWFPRTKIVTSTATSTFLSITTTTTTNAIATKSLVAVLNPDGLNKKAGINFGLFSANGELASPDEGGTPTVVRRDKISDPGAANEQATLFSTTFSQVPHLPELDSGEFISAASQLDKRIFIFTAITVSITTLMMLGFSYRSRVSFRDHSIDDSDDDNDWSDDEVEFDEEYFYSLPVSIPEKGISLDKMAQQLGVE.

The first 21 residues, 1–21 (MLECLSALLVLFAGGGGSVLA), serve as a signal peptide directing secretion. The Extracellular portion of the chain corresponds to 22–448 (AVQSKTVADP…ISAASQLDKR (427 aa)). Residues 242–264 (KVSSENCSKDTDDKSGSKKERNT) form a disordered region. A helical transmembrane segment spans residues 449–469 (IFIFTAITVSITTLMMLGFSY). Over 470 to 525 (RSRVSFRDHSIDDSDDDNDWSDDEVEFDEEYFYSLPVSIPEKGISLDKMAQQLGVE) the chain is Cytoplasmic.

The protein resides in the membrane. This is an uncharacterized protein from Saccharomyces cerevisiae (strain ATCC 204508 / S288c) (Baker's yeast).